A 105-amino-acid chain; its full sequence is Small ribosomal subunit protein uS17 (105 aa).

The protein belongs to the universal ribosomal protein uS17 family. In terms of assembly, part of the 30S ribosomal subunit.

Functionally, one of the primary rRNA binding proteins, it binds specifically to the 5'-end of 16S ribosomal RNA. This Thermus aquaticus protein is Small ribosomal subunit protein uS17.